The primary structure comprises 204 residues: Peptide deformylase (204 aa).

Fe cation is bound by residues Cys-131 and His-174. Glu-175 is an active-site residue. His-178 is a Fe cation binding site.

This sequence belongs to the polypeptide deformylase family. It depends on Fe(2+) as a cofactor.

It catalyses the reaction N-terminal N-formyl-L-methionyl-[peptide] + H2O = N-terminal L-methionyl-[peptide] + formate. In terms of biological role, removes the formyl group from the N-terminal Met of newly synthesized proteins. Requires at least a dipeptide for an efficient rate of reaction. N-terminal L-methionine is a prerequisite for activity but the enzyme has broad specificity at other positions. This chain is Peptide deformylase, found in Streptococcus gordonii (strain Challis / ATCC 35105 / BCRC 15272 / CH1 / DL1 / V288).